We begin with the raw amino-acid sequence, 397 residues long: Enoyl-[acyl-carrier-protein] reductase [NADH] (397 aa).

Residues 48–53, 74–75, 111–112, and 139–140 each bind NAD(+); these read GASTGY, FE, DA, and VA. Y225 provides a ligand contact to substrate. Y235 serves as the catalytic Proton donor. Residues K244 and 273–275 contribute to the NAD(+) site; that span reads VVT.

It belongs to the TER reductase family. Monomer.

It catalyses the reaction a 2,3-saturated acyl-[ACP] + NAD(+) = a (2E)-enoyl-[ACP] + NADH + H(+). Its pathway is lipid metabolism; fatty acid biosynthesis. Involved in the final reduction of the elongation cycle of fatty acid synthesis (FAS II). Catalyzes the reduction of a carbon-carbon double bond in an enoyl moiety that is covalently linked to an acyl carrier protein (ACP). The sequence is that of Enoyl-[acyl-carrier-protein] reductase [NADH] from Burkholderia mallei (strain NCTC 10247).